An 818-amino-acid polypeptide reads, in one-letter code: Probable beta-glucosidase I (818 aa).

A glycan (N-linked (GlcNAc...) asparagine) is linked at Asn176. Asp204 is an active-site residue. The PA14 domain maps to 374 to 534; that stretch reads DGKPGFTFRV…SQEELISNAV (161 aa). Asn453 and Asn472 each carry an N-linked (GlcNAc...) asparagine glycan.

This sequence belongs to the glycosyl hydrolase 3 family.

It is found in the secreted. The enzyme catalyses Hydrolysis of terminal, non-reducing beta-D-glucosyl residues with release of beta-D-glucose.. The protein operates within glycan metabolism; cellulose degradation. Beta-glucosidases are one of a number of cellulolytic enzymes involved in the degradation of cellulosic biomass. Catalyzes the last step releasing glucose from the inhibitory cellobiose. The sequence is that of Probable beta-glucosidase I (bglI) from Aspergillus niger (strain ATCC MYA-4892 / CBS 513.88 / FGSC A1513).